The primary structure comprises 94 residues: Pyrimidine/purine nucleoside phosphorylase (94 aa).

It belongs to the nucleoside phosphorylase PpnP family.

The catalysed reaction is a purine D-ribonucleoside + phosphate = a purine nucleobase + alpha-D-ribose 1-phosphate. It carries out the reaction adenosine + phosphate = alpha-D-ribose 1-phosphate + adenine. The enzyme catalyses cytidine + phosphate = cytosine + alpha-D-ribose 1-phosphate. It catalyses the reaction guanosine + phosphate = alpha-D-ribose 1-phosphate + guanine. The catalysed reaction is inosine + phosphate = alpha-D-ribose 1-phosphate + hypoxanthine. It carries out the reaction thymidine + phosphate = 2-deoxy-alpha-D-ribose 1-phosphate + thymine. The enzyme catalyses uridine + phosphate = alpha-D-ribose 1-phosphate + uracil. It catalyses the reaction xanthosine + phosphate = alpha-D-ribose 1-phosphate + xanthine. Functionally, catalyzes the phosphorolysis of diverse nucleosides, yielding D-ribose 1-phosphate and the respective free bases. Can use uridine, adenosine, guanosine, cytidine, thymidine, inosine and xanthosine as substrates. Also catalyzes the reverse reactions. In Aeromonas hydrophila subsp. hydrophila (strain ATCC 7966 / DSM 30187 / BCRC 13018 / CCUG 14551 / JCM 1027 / KCTC 2358 / NCIMB 9240 / NCTC 8049), this protein is Pyrimidine/purine nucleoside phosphorylase.